We begin with the raw amino-acid sequence, 227 residues long: Cytochrome c oxidase subunit 2 (227 aa).

The Mitochondrial intermembrane portion of the chain corresponds to 1–14 (MAYPFQLGLQDATS). The chain crosses the membrane as a helical span at residues 15 to 45 (PIMEELLHFHDHTLMIVFLISSLVLYIISLM). The Mitochondrial matrix portion of the chain corresponds to 46-59 (LTTKLTHTSTMDAQ). Residues 60–87 (EVETVWTILPAIILVLIALPSLRILYMM) form a helical membrane-spanning segment. The Mitochondrial intermembrane segment spans residues 88–227 (DEINNPSLTV…YFETWSALMV (140 aa)). Cu cation contacts are provided by His-161, Cys-196, Glu-198, Cys-200, His-204, and Met-207. Position 198 (Glu-198) interacts with Mg(2+). The residue at position 218 (Tyr-218) is a Phosphotyrosine.

Belongs to the cytochrome c oxidase subunit 2 family. As to quaternary structure, component of the cytochrome c oxidase (complex IV, CIV), a multisubunit enzyme composed of 14 subunits. The complex is composed of a catalytic core of 3 subunits MT-CO1, MT-CO2 and MT-CO3, encoded in the mitochondrial DNA, and 11 supernumerary subunits COX4I, COX5A, COX5B, COX6A, COX6B, COX6C, COX7A, COX7B, COX7C, COX8 and NDUFA4, which are encoded in the nuclear genome. The complex exists as a monomer or a dimer and forms supercomplexes (SCs) in the inner mitochondrial membrane with NADH-ubiquinone oxidoreductase (complex I, CI) and ubiquinol-cytochrome c oxidoreductase (cytochrome b-c1 complex, complex III, CIII), resulting in different assemblies (supercomplex SCI(1)III(2)IV(1) and megacomplex MCI(2)III(2)IV(2)). Found in a complex with TMEM177, COA6, COX18, COX20, SCO1 and SCO2. Interacts with TMEM177 in a COX20-dependent manner. Interacts with COX20. Interacts with COX16. The cofactor is Cu cation.

It is found in the mitochondrion inner membrane. It catalyses the reaction 4 Fe(II)-[cytochrome c] + O2 + 8 H(+)(in) = 4 Fe(III)-[cytochrome c] + 2 H2O + 4 H(+)(out). Functionally, component of the cytochrome c oxidase, the last enzyme in the mitochondrial electron transport chain which drives oxidative phosphorylation. The respiratory chain contains 3 multisubunit complexes succinate dehydrogenase (complex II, CII), ubiquinol-cytochrome c oxidoreductase (cytochrome b-c1 complex, complex III, CIII) and cytochrome c oxidase (complex IV, CIV), that cooperate to transfer electrons derived from NADH and succinate to molecular oxygen, creating an electrochemical gradient over the inner membrane that drives transmembrane transport and the ATP synthase. Cytochrome c oxidase is the component of the respiratory chain that catalyzes the reduction of oxygen to water. Electrons originating from reduced cytochrome c in the intermembrane space (IMS) are transferred via the dinuclear copper A center (CU(A)) of subunit 2 and heme A of subunit 1 to the active site in subunit 1, a binuclear center (BNC) formed by heme A3 and copper B (CU(B)). The BNC reduces molecular oxygen to 2 water molecules using 4 electrons from cytochrome c in the IMS and 4 protons from the mitochondrial matrix. This chain is Cytochrome c oxidase subunit 2 (MT-CO2), found in Cerdocyon thous (Crab-eating fox).